We begin with the raw amino-acid sequence, 360 residues long: Histidinol-phosphate aminotransferase (360 aa).

At Lys-219 the chain carries N6-(pyridoxal phosphate)lysine.

It belongs to the class-II pyridoxal-phosphate-dependent aminotransferase family. Histidinol-phosphate aminotransferase subfamily. In terms of assembly, homodimer. The cofactor is pyridoxal 5'-phosphate.

It carries out the reaction L-histidinol phosphate + 2-oxoglutarate = 3-(imidazol-4-yl)-2-oxopropyl phosphate + L-glutamate. The protein operates within amino-acid biosynthesis; L-histidine biosynthesis; L-histidine from 5-phospho-alpha-D-ribose 1-diphosphate: step 7/9. The sequence is that of Histidinol-phosphate aminotransferase from Jannaschia sp. (strain CCS1).